Reading from the N-terminus, the 386-residue chain is Mannitol-1-phosphate 5-dehydrogenase (386 aa).

4–15 (ALHFGAGNIGRG) is an NAD(+) binding site.

This sequence belongs to the mannitol dehydrogenase family.

The catalysed reaction is D-mannitol 1-phosphate + NAD(+) = beta-D-fructose 6-phosphate + NADH + H(+). This is Mannitol-1-phosphate 5-dehydrogenase from Caldanaerobacter subterraneus subsp. tengcongensis (strain DSM 15242 / JCM 11007 / NBRC 100824 / MB4) (Thermoanaerobacter tengcongensis).